A 984-amino-acid chain; its full sequence is MQEHLVVTLDGKDYLVEPGTNLLEFIKSQDTFVPSICYNESMGPIQTCDTCTVEIDGKIERSCSTVIDRPMTVNTVNNDVKDAQKEALDRILEKHMLYCTVCDYNNGDCEIHNTMDAWGLQHQTYEYKEKPYEKDYGPFYRYDPNQCILCGRCVEACQDIEVNETIRIDWDREHPRVIWDNDVPINESSCVSCGQCATVCPCNAMMEVNMEGNAGYMTDTEPGSLAAMIDLTKKAEPGYGPLFAISDSEAEMRKERIKKTKTVCTYCGVGCSFEVWTKDREILKVQPSHDSPANKIVTCVKGKFSWGHINSDQRLTKPLVRKNGEFHEVEWDEALNVIADNFTSIKEKYGPDALSFISSSKATNEESYLMQKLARQVIGTNNVDNCSRYCQAPATKGLFRTVGHGGDSGSIEDLEKAAMSVLIGTNTAEAHPVIASRMKRAQKLFGQKIHVFDIRKHEMAERADRFYQPKPGTDLAWLSAVTKYIIDHDLHDKAFIDEWVDDFDEYYKSLETFTMAFAEEATGIPESELIKFAEECAKAESVVICWAMGITQQDIGSDSSTAISNLLLVTGNYRRPGTGAYPLRGHNNVQGCSDMGSMPDKITGYQSIEADDIRAKFEKEYGVKLNPKAGKDNHEMVEGIHDGEVHSLYLYGEDTGIVDSNINFVQAAFEKLDFMVVQDEFLTFTATYADVVLPASPSLEKDGTFTNTERRIQRLYQALEPLGDSKPDWKIFQAIANRLGFDWNYKHPSEIMDEVARLTPLYAGVSYDRLEGFNSLQWPVQPDGTDEPILYLEGFNFDNGKAKLFPLSFDNYFKQDEIYDIHVNNGRLLEHFHEGNMTYQTPMIKYKVPRAFVEISPELAEDRGIHEGAEVKLISETGEAVLQVHVTDRVKGKEIYIPLNNDAMENGDLGAINLLTNSDVDQYTDTPSYKRTSCRLEVITKRGKSPLNPNNFRVNKKRHPQYSVQVQKKWERSDYVFPGNQVDK.

Residues 3–79 form the 2Fe-2S ferredoxin-type domain; that stretch reads EHLVVTLDGK…PMTVNTVNND (77 aa). Positions 37, 48, 51, and 63 each coordinate [2Fe-2S] cluster. Residues 79 to 119 form the 4Fe-4S His(Cys)3-ligated-type domain; that stretch reads DVKDAQKEALDRILEKHMLYCTVCDYNNGDCEIHNTMDAWG. Positions 95, 99, 102, 109, 147, 150, 153, 157, 190, 193, 196, 200, 264, 267, 271, and 299 each coordinate [4Fe-4S] cluster. 2 4Fe-4S ferredoxin-type domains span residues 138-165 and 181-211; these read PFYR…VNET and NDVP…VNME. The segment at 252–984 is formate dehydrogenase; it reads MRKERIKKTK…YVFPGNQVDK (733 aa). Residues 257–313 form the 4Fe-4S Mo/W bis-MGD-type domain; the sequence is IKKTKTVCTYCGVGCSFEVWTKDREILKVQPSHDSPANKIVTCVKGKFSWGHINSDQ.

This sequence in the C-terminal section; belongs to the prokaryotic molybdopterin-containing oxidoreductase family. [2Fe-2S] cluster is required as a cofactor. [4Fe-4S] cluster serves as cofactor. The cofactor is Mo-bis(molybdopterin guanine dinucleotide).

The catalysed reaction is formate + NAD(+) = CO2 + NADH. In Staphylococcus aureus (strain Mu50 / ATCC 700699), this protein is Putative formate dehydrogenase SAV2309.